The chain runs to 674 residues: CRS2-associated factor 1, chloroplastic (674 aa).

A chloroplast-targeting transit peptide spans 1–54 (MATARLPSRSFLSPAQQSYPRLPASVRLCLSHHEQPPTGPKRHRRAATSHPAFS). A disordered region spans residues 31–61 (SHHEQPPTGPKRHRRAATSHPAFSAAARGRA). A compositionally biased stretch (low complexity) spans 48–57 (TSHPAFSAAA). CRM domains follow at residues 183–279 (EPLT…TRPC) and 301–397 (GGLT…LPPL). Residues 554 to 576 (GLLCLLEQAIHSGRALVLSEDEL) are CRS2 binding.

As to quaternary structure, interacts with CRS2 and RNA. Part of large ribonucleo-protein complexes that include group IIB introns, CRS2 and CAF1.

Its subcellular location is the plastid. The protein localises to the chloroplast stroma. Functionally, required for the splicing of group IIB introns in chloroplasts. Forms splicing particles with CRS2. Interacts with RNA and confers intron specificity of the splicing particles. The sequence is that of CRS2-associated factor 1, chloroplastic (CAF1) from Zea mays (Maize).